We begin with the raw amino-acid sequence, 504 residues long: Dolichol kinase sec59 (504 aa).

Topologically, residues 1–55 (MYIMSKKCYDTSEKIDREQECVEVNYQHRNFESILEIFSVLFIPFLCNSGKKFLQ) are cytoplasmic. The helical transmembrane segment at 56–76 (ISNASFFLPACFYLLGSSSII) threads the bilayer. A topological domain (lumenal) is located at residue Q77. The chain crosses the membrane as a helical span at residues 78-98 (LYEPLLWLSSFPFCILYVGFG). Topologically, residues 99–157 (ENSVLYHEMYTVCLYNALLSLTQRWKWLSIVLDGLGNSSVNLKLHETVILAFLEITQNS) are cytoplasmic. The chain crosses the membrane as a helical span at residues 158-178 (FTFIEGILICTGLTGLCFATF). Residues 179-187 (SYEVSPVVS) are Lumenal-facing. Residues 188–208 (VLSGVLLISLPTLILLNLCIL) form a helical membrane-spanning segment. At 209 to 215 (KLAAKLH) the chain is on the cytoplasmic side. The chain crosses the membrane as a helical span at residues 216-236 (LSALFTTCLIYFFSALLVFLV). The Lumenal segment spans residues 237–263 (SRSWVAGQLGQAPEVWLFNQIFSHRNS). Residues 264 to 284 (LTRIKIIIWWIICLGCFIFIL) traverse the membrane as a helical segment. Over 285 to 325 (LRSNRNNPLGKYFTTEDEVLNFRRKTYHALVVFLFLPVCCL) the chain is Cytoplasmic. The chain crosses the membrane as a helical span at residues 326–347 (DPHFLHLSFSGVLFIFLFVEGI). The Lumenal segment spans residues 348 to 373 (RILRLKPFGKMIHEFLWEYTDNRDHK). A helical transmembrane segment spans residues 374 to 394 (GPLIISHIYLLIGCAIPIWLS). Over 395–403 (NALKGPVAS) the chain is Cytoplasmic. The chain crosses the membrane as a helical span at residues 404 to 424 (VELLVGVLCLGCGDSMASIIG). Residues 425–440 (KRFGKHRISKTNKSIE) are Lumenal-facing. The helical transmembrane segment at 441–461 (GVFAFSISVFLVLHLTQAFHV) threads the bilayer. Residue C462 is a topological domain, cytoplasmic. A helical membrane pass occupies residues 463-483 (PSVTFWKTLFMSLCTAILEGV). Residues 484 to 504 (STENDNLILPMYMWVLYQALD) are Lumenal-facing.

Belongs to the polyprenol kinase family.

It localises to the endoplasmic reticulum membrane. It catalyses the reaction a di-trans,poly-cis-dolichol + CTP = a di-trans,poly-cis-dolichyl phosphate + CDP + H(+). Its pathway is protein modification; protein glycosylation. Its function is as follows. Catalyzes CTP-mediated phosphorylation of dolichol, the terminal step in de novo dolichyl monophosphate (Dol-P) biosynthesis. Dol-P is a lipid carrier essential for the synthesis of N-linked and O-linked oligosaccharides and for GPI anchors. The sequence is that of Dolichol kinase sec59 from Schizosaccharomyces pombe (strain 972 / ATCC 24843) (Fission yeast).